Reading from the N-terminus, the 484-residue chain is Ribosome biogenesis protein YTM1 (484 aa).

Residues 13 to 95 (VKVTFTTTEA…ESNLTLQYVR (83 aa)) are ubiquitin-like (UBL) domain. WD repeat units follow at residues 122 to 161 (SPSG…IATS), 168 to 206 (GHTA…HFSG), 216 to 255 (GHTG…APEA), 288 to 328 (IHSA…VVTT), 330 to 373 (STSH…ATTS), 379 to 419 (GHAN…PATQ), and 448 to 484 (GEGC…VVAE).

This sequence belongs to the WD repeat WDR12/YTM1 family. As to quaternary structure, component of the NOP7 complex, composed of ERB1, NOP7 and YTM1. The complex is held together by ERB1, which interacts with NOP7 via its N-terminal domain and with YTM1 via a high-affinity interaction between the seven-bladed beta-propeller domains of the 2 proteins. The NOP7 complex associates with the 66S pre-ribosome. Interacts (via UBL domain) with MDN1 (via VWFA/MIDAS domain).

Its subcellular location is the nucleus. The protein localises to the nucleolus. It is found in the nucleoplasm. Its function is as follows. Component of the NOP7 complex, which is required for maturation of the 25S and 5.8S ribosomal RNAs and formation of the 60S ribosome. The chain is Ribosome biogenesis protein YTM1 from Chaetomium globosum (strain ATCC 6205 / CBS 148.51 / DSM 1962 / NBRC 6347 / NRRL 1970) (Soil fungus).